A 3195-amino-acid chain; its full sequence is Large tegument protein deneddylase (3195 aa).

The Peptidase C76 domain maps to 10–242 (VAAASRSQFD…VEVISAALRA (233 aa)). Active-site residues include Cys30, Asp173, and His175. Disordered stretches follow at residues 287 to 374 (RGTA…GALA), 2407 to 2776 (NPAH…DSNY), 2829 to 3068 (AGVG…AALD), and 3128 to 3147 (ASDL…APLD). The span at 338 to 347 (KVKKPNKGKK) shows a compositional bias: basic residues. Residues 2470–2482 (KIERASGKNRKTE) are compositionally biased toward basic and acidic residues. The segment covering 2491-2503 (AARGRAAAPPTET) has biased composition (low complexity). Basic and acidic residues-rich tracts occupy residues 2504–2527 (KTTE…RAPH) and 2538–2562 (RPPR…DKAA). Composition is skewed to basic residues over residues 2588-2615 (PKTK…HRTH) and 2636-2648 (GRQR…GKKR). Basic and acidic residues-rich tracts occupy residues 2649–2672 (SGTD…KFSR) and 2687–2696 (ACDRLGERGN). Residues 2701–2712 (PRAPASSPPPPG) show a composition bias toward pro residues. Basic and acidic residues predominate over residues 2714–2723 (QADHGIDQRE). Acidic residues-rich tracts occupy residues 2748 to 2768 (DDGD…EEDV) and 2835 to 2844 (WSEEDEDAPA). The segment covering 2850 to 2864 (STNVEVATHGYTSDD) has biased composition (polar residues). Over residues 2869 to 2878 (DESKRARATR) the composition is skewed to basic and acidic residues. A compositionally biased stretch (low complexity) spans 2887 to 2903 (PASPLAPSTPSSLPTPA). Residues 2959–2981 (DDARKKQENSSHERKDDGVRWEI) show a composition bias toward basic and acidic residues. Positions 2982 to 2994 (DLDSDQGDYSDAS) are enriched in acidic residues. Basic and acidic residues-rich tracts occupy residues 2995–3021 (DDCK…KSES), 3050–3062 (SDDK…DPKL), and 3131–3140 (LDDHQSDQPR).

The protein belongs to the herpesviridae large tegument protein family. Interacts with host CUL1 and CUL4A; these interactions inhibit the E3 ligase activity of cullins. Interacts with inner tegument protein. Interacts with capsid vertex specific component CVC2. Interacts with the major capsid protein/MCP.

It is found in the virion tegument. The protein resides in the host cytoplasm. It localises to the host nucleus. It carries out the reaction Thiol-dependent hydrolysis of ester, thioester, amide, peptide and isopeptide bonds formed by the C-terminal Gly of ubiquitin (a 76-residue protein attached to proteins as an intracellular targeting signal).. Large tegument protein that plays multiple roles in the viral cycle. During viral entry, remains associated with the capsid while most of the tegument is detached and participates in the capsid transport toward the host nucleus. Plays a role in the routing of the capsid at the nuclear pore complex and subsequent uncoating. Within the host nucleus, acts as a deneddylase and promotes the degradation of nuclear CRLs (cullin-RING ubiquitin ligases) and thereby stabilizes nuclear CRL substrates, while cytoplasmic CRLs remain unaffected. These modifications prevent host cell cycle S-phase progression and create a favorable environment allowing efficient viral genome replication. Participates later in the secondary envelopment of capsids. Indeed, plays a linker role for the association of the outer viral tegument to the capsids together with the inner tegument protein. This chain is Large tegument protein deneddylase (UL36), found in Amazona oratrix (yellow-headed parrot).